The following is a 235-amino-acid chain: Glucosamine-6-phosphate deaminase (235 aa).

D62 serves as the catalytic Proton acceptor; for enolization step. N128 (for ring-opening step) is an active-site residue. H130 functions as the Proton acceptor; for ring-opening step in the catalytic mechanism. E135 functions as the For ring-opening step in the catalytic mechanism.

It belongs to the glucosamine/galactosamine-6-phosphate isomerase family. NagB subfamily.

The enzyme catalyses alpha-D-glucosamine 6-phosphate + H2O = beta-D-fructose 6-phosphate + NH4(+). The protein operates within amino-sugar metabolism; N-acetylneuraminate degradation; D-fructose 6-phosphate from N-acetylneuraminate: step 5/5. In terms of biological role, catalyzes the reversible isomerization-deamination of glucosamine 6-phosphate (GlcN6P) to form fructose 6-phosphate (Fru6P) and ammonium ion. The sequence is that of Glucosamine-6-phosphate deaminase from Lactococcus lactis subsp. cremoris (strain SK11).